Reading from the N-terminus, the 498-residue chain is UDP-N-acetylmuramate--L-alanine ligase (498 aa).

133 to 139 is an ATP binding site; it reads GSSGKTT.

The protein belongs to the MurCDEF family.

The protein resides in the cytoplasm. The catalysed reaction is UDP-N-acetyl-alpha-D-muramate + L-alanine + ATP = UDP-N-acetyl-alpha-D-muramoyl-L-alanine + ADP + phosphate + H(+). The protein operates within cell wall biogenesis; peptidoglycan biosynthesis. Cell wall formation. The sequence is that of UDP-N-acetylmuramate--L-alanine ligase from Wolbachia pipientis wMel.